Here is a 123-residue protein sequence, read N- to C-terminus: Non-specific lipid-transfer protein (123 aa).

The first 25 residues, 1 to 25, serve as a signal peptide directing secretion; the sequence is MAVKKMVEAVFVVGLVVTMMNVWGA. 4 disulfides stabilise this stretch: Cys34–Cys82, Cys44–Cys59, Cys60–Cys104, and Cys80–Cys119.

It belongs to the plant LTP family.

Functionally, plant non-specific lipid-transfer proteins transfer phospholipids as well as galactolipids across membranes. May play a role in wax or cutin deposition in the cell walls of expanding epidermal cells and certain secretory tissues. The polypeptide is Non-specific lipid-transfer protein (Pinus taeda (Loblolly pine)).